A 77-amino-acid chain; its full sequence is Small ribosomal subunit protein bS21 (77 aa).

This sequence belongs to the bacterial ribosomal protein bS21 family.

The protein is Small ribosomal subunit protein bS21 of Methylococcus capsulatus (strain ATCC 33009 / NCIMB 11132 / Bath).